A 331-amino-acid polypeptide reads, in one-letter code: Tryptophan--tRNA ligase (331 aa).

Residues 10 to 12 and 18 to 19 contribute to the ATP site; these read QPS and GN. A 'HIGH' region motif is present at residues 11–19; sequence PSGQLTLGN. L-tryptophan is bound at residue Asp133. ATP-binding positions include 145–147, Val184, and 193–197; these read GED and KMSKS. The 'KMSKS' region signature appears at 193-197; sequence KMSKS.

This sequence belongs to the class-I aminoacyl-tRNA synthetase family. As to quaternary structure, homodimer.

The protein resides in the cytoplasm. The catalysed reaction is tRNA(Trp) + L-tryptophan + ATP = L-tryptophyl-tRNA(Trp) + AMP + diphosphate + H(+). Functionally, catalyzes the attachment of tryptophan to tRNA(Trp). In Listeria innocua serovar 6a (strain ATCC BAA-680 / CLIP 11262), this protein is Tryptophan--tRNA ligase.